Reading from the N-terminus, the 203-residue chain is Glycerol-3-phosphate acyltransferase (203 aa).

A run of 6 helical transmembrane segments spans residues 5-25 (IIYLLAYLIGAIPFGLLLAQI), 58-78 (TLAVATVILDALKGVLPILMA), 87-107 (ILWTMAVLAVFGHCFSPYLKF), 118-138 (GVLAVFLPFEIICALLAWFII), 150-170 (LGAMIVLIATSFIFHYDIPVI), and 176-196 (IFIIAFIVVYKHIPNILRLIG).

It belongs to the PlsY family. Probably interacts with PlsX.

The protein localises to the cell inner membrane. It catalyses the reaction an acyl phosphate + sn-glycerol 3-phosphate = a 1-acyl-sn-glycero-3-phosphate + phosphate. It participates in lipid metabolism; phospholipid metabolism. In terms of biological role, catalyzes the transfer of an acyl group from acyl-phosphate (acyl-PO(4)) to glycerol-3-phosphate (G3P) to form lysophosphatidic acid (LPA). This enzyme utilizes acyl-phosphate as fatty acyl donor, but not acyl-CoA or acyl-ACP. The chain is Glycerol-3-phosphate acyltransferase from Campylobacter lari (strain RM2100 / D67 / ATCC BAA-1060).